A 213-amino-acid polypeptide reads, in one-letter code: Orotate phosphoribosyltransferase (213 aa).

K26 contacts 5-phospho-alpha-D-ribose 1-diphosphate. 34 to 35 lines the orotate pocket; sequence FF. 5-phospho-alpha-D-ribose 1-diphosphate is bound by residues 72–73, R99, K100, K103, H105, and 124–132; these read YK and DDVITAGTA. Positions 128 and 156 each coordinate orotate.

It belongs to the purine/pyrimidine phosphoribosyltransferase family. PyrE subfamily. In terms of assembly, homodimer. Requires Mg(2+) as cofactor.

The enzyme catalyses orotidine 5'-phosphate + diphosphate = orotate + 5-phospho-alpha-D-ribose 1-diphosphate. It participates in pyrimidine metabolism; UMP biosynthesis via de novo pathway; UMP from orotate: step 1/2. Catalyzes the transfer of a ribosyl phosphate group from 5-phosphoribose 1-diphosphate to orotate, leading to the formation of orotidine monophosphate (OMP). The protein is Orotate phosphoribosyltransferase of Cronobacter sakazakii (strain ATCC BAA-894) (Enterobacter sakazakii).